The primary structure comprises 346 residues: Holliday junction branch migration complex subunit RuvB (346 aa).

The large ATPase domain (RuvB-L) stretch occupies residues 4–185 (SDRIITASPF…FGIVSRLEFY (182 aa)). ATP contacts are provided by residues Leu-24, Arg-25, Gly-66, Lys-69, Thr-70, Thr-71, 132 to 134 (EDY), Arg-175, Tyr-185, and Arg-222. Thr-70 contacts Mg(2+). A small ATPAse domain (RuvB-S) region spans residues 186–256 (TADELGKIVT…VADAALQMLD (71 aa)). The head domain (RuvB-H) stretch occupies residues 259–346 (ATGLDVLDRK…TTVPSLFDPD (88 aa)). DNA contacts are provided by Arg-295, Arg-314, and Arg-319.

This sequence belongs to the RuvB family. In terms of assembly, homohexamer. Forms an RuvA(8)-RuvB(12)-Holliday junction (HJ) complex. HJ DNA is sandwiched between 2 RuvA tetramers; dsDNA enters through RuvA and exits via RuvB. An RuvB hexamer assembles on each DNA strand where it exits the tetramer. Each RuvB hexamer is contacted by two RuvA subunits (via domain III) on 2 adjacent RuvB subunits; this complex drives branch migration. In the full resolvosome a probable DNA-RuvA(4)-RuvB(12)-RuvC(2) complex forms which resolves the HJ.

The protein resides in the cytoplasm. The catalysed reaction is ATP + H2O = ADP + phosphate + H(+). Its function is as follows. The RuvA-RuvB-RuvC complex processes Holliday junction (HJ) DNA during genetic recombination and DNA repair, while the RuvA-RuvB complex plays an important role in the rescue of blocked DNA replication forks via replication fork reversal (RFR). RuvA specifically binds to HJ cruciform DNA, conferring on it an open structure. The RuvB hexamer acts as an ATP-dependent pump, pulling dsDNA into and through the RuvAB complex. RuvB forms 2 homohexamers on either side of HJ DNA bound by 1 or 2 RuvA tetramers; 4 subunits per hexamer contact DNA at a time. Coordinated motions by a converter formed by DNA-disengaged RuvB subunits stimulates ATP hydrolysis and nucleotide exchange. Immobilization of the converter enables RuvB to convert the ATP-contained energy into a lever motion, pulling 2 nucleotides of DNA out of the RuvA tetramer per ATP hydrolyzed, thus driving DNA branch migration. The RuvB motors rotate together with the DNA substrate, which together with the progressing nucleotide cycle form the mechanistic basis for DNA recombination by continuous HJ branch migration. Branch migration allows RuvC to scan DNA until it finds its consensus sequence, where it cleaves and resolves cruciform DNA. This is Holliday junction branch migration complex subunit RuvB from Nitrosomonas europaea (strain ATCC 19718 / CIP 103999 / KCTC 2705 / NBRC 14298).